Here is a 102-residue protein sequence, read N- to C-terminus: Large ribosomal subunit protein bL21 (102 aa).

A compositionally biased stretch (basic residues) spans 79–91 (RKDSKRKKGHRQP). The disordered stretch occupies residues 79 to 102 (RKDSKRKKGHRQPYTKLTIDKINA).

This sequence belongs to the bacterial ribosomal protein bL21 family. In terms of assembly, part of the 50S ribosomal subunit. Contacts protein L20.

In terms of biological role, this protein binds to 23S rRNA in the presence of protein L20. This chain is Large ribosomal subunit protein bL21, found in Staphylococcus epidermidis (strain ATCC 35984 / DSM 28319 / BCRC 17069 / CCUG 31568 / BM 3577 / RP62A).